Consider the following 623-residue polypeptide: Xaa-Pro aminopeptidase 1 (623 aa).

Residue Arg-77 participates in a peptide binding. Residue Lys-304 is modified to N6-acetyllysine. His-395 serves as a coordination point for a peptide. Positions 415, 426, and 489 each coordinate Mn(2+). 3 residues coordinate a peptide: His-489, His-498, and Glu-523. 2 residues coordinate Mn(2+): Glu-523 and Glu-537.

It belongs to the peptidase M24B family. Homodimer. The cofactor is Mn(2+).

It is found in the cytoplasm. The protein localises to the cytosol. The catalysed reaction is Release of any N-terminal amino acid, including proline, that is linked to proline, even from a dipeptide or tripeptide.. Functionally, metalloaminopeptidase that catalyzes the removal of a penultimate prolyl residue from the N-termini of peptides, such as Arg-Pro-Pro. Contributes to the degradation of bradykinin. The protein is Xaa-Pro aminopeptidase 1 (XPNPEP1) of Bos taurus (Bovine).